A 169-amino-acid polypeptide reads, in one-letter code: NAD(P)H-quinone oxidoreductase subunit J, chloroplastic (169 aa).

It belongs to the complex I 30 kDa subunit family. NDH is composed of at least 16 different subunits, 5 of which are encoded in the nucleus.

It is found in the plastid. It localises to the chloroplast thylakoid membrane. The enzyme catalyses a plastoquinone + NADH + (n+1) H(+)(in) = a plastoquinol + NAD(+) + n H(+)(out). The catalysed reaction is a plastoquinone + NADPH + (n+1) H(+)(in) = a plastoquinol + NADP(+) + n H(+)(out). In terms of biological role, NDH shuttles electrons from NAD(P)H:plastoquinone, via FMN and iron-sulfur (Fe-S) centers, to quinones in the photosynthetic chain and possibly in a chloroplast respiratory chain. The immediate electron acceptor for the enzyme in this species is believed to be plastoquinone. Couples the redox reaction to proton translocation, and thus conserves the redox energy in a proton gradient. This chain is NAD(P)H-quinone oxidoreductase subunit J, chloroplastic, found in Physcomitrium patens (Spreading-leaved earth moss).